The following is a 163-amino-acid chain: Lysosomal enzyme trafficking factor (163 aa).

Helical transmembrane passes span 40–60 (MGWIGVGLYLLASAAAFYYVF) and 98–118 (LPFWLWTIIFLIPYLQMFLFL).

It belongs to the LYSET family. In terms of assembly, interacts with GNPTAB; this interaction is important for proper localization of GNPTAB in Golgi stacks. Interacts with MBTPS1.

The protein resides in the golgi apparatus membrane. Required for mannose-6-phosphate-dependent trafficking of lysosomal enzymes. LYSET bridges GlcNAc-1-phosphate transferase (GNPTAB), to the membrane-bound transcription factor site-1 protease (MBTPS1), thus allowing proteolytic activation of the GNPTAB. GNPTAB is involved in the regulation of M6P-dependent Golgi-to-lysosome trafficking of lysosomal enzymes. LYSET is thus an essential factor for maturation and delivery of lysosomal hydrolases. Plays an essential function for cells that depend on lysosomal catabolism to generate nutrients. This is Lysosomal enzyme trafficking factor (Lyset) from Mus musculus (Mouse).